Consider the following 115-residue polypeptide: Inner membrane protein YidH (115 aa).

The Cytoplasmic portion of the chain corresponds to 1–30 (MKISRLGEAPDYRFSLANERTFLAWIRTAL). The helical transmembrane segment at 31–51 (GFLAAGVGLDQLAPDFATPVI) threads the bilayer. At 52–53 (RE) the chain is on the periplasmic side. Residues 54–74 (LLALLLCLFSGGLAMYGYLRW) traverse the membrane as a helical segment. Residues 75–92 (LRNEKAMRLKEDLPYTNS) lie on the Cytoplasmic side of the membrane. Residues 93–113 (LLIISLILMVVAVIVMGLVLY) traverse the membrane as a helical segment. The Periplasmic portion of the chain corresponds to 114–115 (AG).

It to M.tuberculosis Rv2272.

It is found in the cell inner membrane. This is Inner membrane protein YidH (yidH) from Escherichia coli O157:H7.